The chain runs to 162 residues: NADH-quinone oxidoreductase subunit I (162 aa).

4Fe-4S ferredoxin-type domains follow at residues 53–83 and 93–122; these read LRRYPNGEERCIACKLCEAVCPALAITIESE and TRYDIDLTKCIFCGFCEESCPVDSIVETHI. C63, C66, C69, C73, C102, C105, C108, and C112 together coordinate [4Fe-4S] cluster.

Belongs to the complex I 23 kDa subunit family. NDH-1 is composed of 14 different subunits. Subunits NuoA, H, J, K, L, M, N constitute the membrane sector of the complex. It depends on [4Fe-4S] cluster as a cofactor.

It is found in the cell inner membrane. The enzyme catalyses a quinone + NADH + 5 H(+)(in) = a quinol + NAD(+) + 4 H(+)(out). In terms of biological role, NDH-1 shuttles electrons from NADH, via FMN and iron-sulfur (Fe-S) centers, to quinones in the respiratory chain. The immediate electron acceptor for the enzyme in this species is believed to be ubiquinone. Couples the redox reaction to proton translocation (for every two electrons transferred, four hydrogen ions are translocated across the cytoplasmic membrane), and thus conserves the redox energy in a proton gradient. In Bordetella bronchiseptica (strain ATCC BAA-588 / NCTC 13252 / RB50) (Alcaligenes bronchisepticus), this protein is NADH-quinone oxidoreductase subunit I.